The primary structure comprises 262 residues: tRNA pseudouridine synthase A (262 aa).

D51 (nucleophile) is an active-site residue. Y109 lines the substrate pocket.

This sequence belongs to the tRNA pseudouridine synthase TruA family. In terms of assembly, homodimer.

The catalysed reaction is uridine(38/39/40) in tRNA = pseudouridine(38/39/40) in tRNA. In terms of biological role, formation of pseudouridine at positions 38, 39 and 40 in the anticodon stem and loop of transfer RNAs. In Glaesserella parasuis serovar 5 (strain SH0165) (Haemophilus parasuis), this protein is tRNA pseudouridine synthase A.